A 131-amino-acid polypeptide reads, in one-letter code: Large ribosomal subunit protein bL12 (131 aa).

Residues Ser100–Gly125 show a composition bias toward basic and acidic residues. Residues Ser100–Lys131 form a disordered region.

Belongs to the bacterial ribosomal protein bL12 family. In terms of assembly, homodimer. Part of the ribosomal stalk of the 50S ribosomal subunit. Forms a multimeric L10(L12)X complex, where L10 forms an elongated spine to which 2 to 4 L12 dimers bind in a sequential fashion. Binds GTP-bound translation factors.

In terms of biological role, forms part of the ribosomal stalk which helps the ribosome interact with GTP-bound translation factors. Is thus essential for accurate translation. This Cyanothece sp. (strain PCC 7425 / ATCC 29141) protein is Large ribosomal subunit protein bL12.